We begin with the raw amino-acid sequence, 259 residues long: 5'-nucleotidase SurE (259 aa).

Residues Asp-8, Asp-9, Ser-41, and Asn-99 each contribute to the a divalent metal cation site.

This sequence belongs to the SurE nucleotidase family. It depends on a divalent metal cation as a cofactor.

The protein localises to the cytoplasm. The enzyme catalyses a ribonucleoside 5'-phosphate + H2O = a ribonucleoside + phosphate. Its function is as follows. Nucleotidase that shows phosphatase activity on nucleoside 5'-monophosphates. In Synechococcus sp. (strain JA-3-3Ab) (Cyanobacteria bacterium Yellowstone A-Prime), this protein is 5'-nucleotidase SurE.